Here is a 306-residue protein sequence, read N- to C-terminus: HTH-type transcriptional regulator AlkR (306 aa).

In terms of domain architecture, HTH araC/xylS-type spans 207–305 (SNALAAIHAY…EQSPKHYRQQ (99 aa)). 2 consecutive DNA-binding regions (H-T-H motif) follow at residues 224–245 (ESLADQCCMSRSKFATLFQSIV) and 272–295 (IQQIANKVGYSSETAFSQAFKRQF).

The protein operates within hydrocarbon metabolism; alkane degradation. Its function is as follows. This protein activates the expression of the alkane 1-monooxygenase AlkM. This chain is HTH-type transcriptional regulator AlkR (alkR), found in Acinetobacter baylyi (strain ATCC 33305 / BD413 / ADP1).